Consider the following 554-residue polypeptide: Eukaryotic translation initiation factor 3 subunit D-2 (554 aa).

Residues 291–305 (QFDLLTVNETALEPP) form an RNA gate region. Residues 530–554 (NAFDSDGNEDEETSEDRPFLKSMAN) form a disordered region.

This sequence belongs to the eIF-3 subunit D family. As to quaternary structure, component of the eukaryotic translation initiation factor 3 (eIF-3) complex. The eIF-3 complex interacts with pix.

Its subcellular location is the cytoplasm. In terms of biological role, mRNA cap-binding component of the eukaryotic translation initiation factor 3 (eIF-3) complex, which is involved in protein synthesis of a specialized repertoire of mRNAs and, together with other initiation factors, stimulates binding of mRNA and methionyl-tRNAi to the 40S ribosome. The eIF-3 complex specifically targets and initiates translation of a subset of mRNAs involved in cell proliferation. In the eIF-3 complex, eif3d specifically recognizes and binds the 7-methylguanosine cap of a subset of mRNAs. This is Eukaryotic translation initiation factor 3 subunit D-2 from Drosophila mojavensis (Fruit fly).